The following is a 285-amino-acid chain: uncharacterized protein (285 aa).

This is an uncharacterized protein from Borreliella burgdorferi (strain ATCC 35210 / DSM 4680 / CIP 102532 / B31) (Borrelia burgdorferi).